The sequence spans 156 residues: MNINATLLGQAISFALFVWFCMKYVWPPLMKAIEERQKKIADGLQAAERAAKDLDLAQANASDQLKEAKRTATEIIEQANKRKSQILDEAREEAQAERQKILAQAEAELEAERNRARDDLRKQVATLAVAGAEKILERSIDKDAQKDILDNITAKL.

A helical transmembrane segment spans residues 7-29; the sequence is LLGQAISFALFVWFCMKYVWPPL.

It belongs to the ATPase B chain family. F-type ATPases have 2 components, F(1) - the catalytic core - and F(0) - the membrane proton channel. F(1) has five subunits: alpha(3), beta(3), gamma(1), delta(1), epsilon(1). F(0) has three main subunits: a(1), b(2) and c(10-14). The alpha and beta chains form an alternating ring which encloses part of the gamma chain. F(1) is attached to F(0) by a central stalk formed by the gamma and epsilon chains, while a peripheral stalk is formed by the delta and b chains.

Its subcellular location is the cell inner membrane. F(1)F(0) ATP synthase produces ATP from ADP in the presence of a proton or sodium gradient. F-type ATPases consist of two structural domains, F(1) containing the extramembraneous catalytic core and F(0) containing the membrane proton channel, linked together by a central stalk and a peripheral stalk. During catalysis, ATP synthesis in the catalytic domain of F(1) is coupled via a rotary mechanism of the central stalk subunits to proton translocation. In terms of biological role, component of the F(0) channel, it forms part of the peripheral stalk, linking F(1) to F(0). In Vibrio alginolyticus, this protein is ATP synthase subunit b.